The sequence spans 193 residues: Xanthine phosphoribosyltransferase (193 aa).

Xanthine-binding residues include L20 and T27. Position 128-132 (128-132) interacts with 5-phospho-alpha-D-ribose 1-diphosphate; it reads ANGQA. K156 serves as a coordination point for xanthine.

It belongs to the purine/pyrimidine phosphoribosyltransferase family. Xpt subfamily. In terms of assembly, homodimer.

It is found in the cytoplasm. The enzyme catalyses XMP + diphosphate = xanthine + 5-phospho-alpha-D-ribose 1-diphosphate. Its pathway is purine metabolism; XMP biosynthesis via salvage pathway; XMP from xanthine: step 1/1. Converts the preformed base xanthine, a product of nucleic acid breakdown, to xanthosine 5'-monophosphate (XMP), so it can be reused for RNA or DNA synthesis. This Streptococcus equi subsp. equi (strain 4047) protein is Xanthine phosphoribosyltransferase.